Reading from the N-terminus, the 466-residue chain is DNA repair protein RadA (466 aa).

The C4-type zinc-finger motif lies at C12 to C29. G100 to S107 provides a ligand contact to ATP. Positions K261–G265 match the RadA KNRFG motif motif. The interval D359–Q466 is lon-protease-like.

It belongs to the RecA family. RadA subfamily. Interacts with DisA.

In terms of biological role, DNA-dependent ATPase involved in processing of recombination intermediates, plays a role in repairing DNA breaks. Stimulates the branch migration of RecA-mediated strand transfer reactions, allowing the 3' invading strand to extend heteroduplex DNA faster. Binds ssDNA in the presence of ADP but not other nucleotides, has ATPase activity that is stimulated by ssDNA and various branched DNA structures, but inhibited by SSB. Does not have RecA's homology-searching function. Also inhibits the diadenylate cyclase activity of DisA. This chain is DNA repair protein RadA, found in Mycolicibacterium smegmatis (strain ATCC 700084 / mc(2)155) (Mycobacterium smegmatis).